The following is a 251-amino-acid chain: 5'-nucleotidase SurE (251 aa).

Positions 8, 9, 39, and 95 each coordinate a divalent metal cation.

It belongs to the SurE nucleotidase family. Requires a divalent metal cation as cofactor.

It localises to the cytoplasm. It catalyses the reaction a ribonucleoside 5'-phosphate + H2O = a ribonucleoside + phosphate. Functionally, nucleotidase that shows phosphatase activity on nucleoside 5'-monophosphates. In Ralstonia nicotianae (strain ATCC BAA-1114 / GMI1000) (Ralstonia solanacearum), this protein is 5'-nucleotidase SurE.